Here is an 89-residue protein sequence, read N- to C-terminus: Small ribosomal subunit protein uS14 (89 aa).

It belongs to the universal ribosomal protein uS14 family. In terms of assembly, part of the 30S ribosomal subunit. Contacts proteins S3 and S10.

Binds 16S rRNA, required for the assembly of 30S particles and may also be responsible for determining the conformation of the 16S rRNA at the A site. The polypeptide is Small ribosomal subunit protein uS14 (Phytoplasma australiense).